The chain runs to 502 residues: Protein DETOXIFICATION 7 (502 aa).

The next 12 helical transmembrane spans lie at 36-56, 68-88, 112-132, 143-163, 182-202, 208-228, 262-282, 291-311, 331-351, 375-395, 408-428, and 436-456; these read MAAP…ISMV, AVAI…VGFA, YSSM…WFFM, PLIS…LFGF, LFVS…LLVY, IVGA…LLWI, AMMI…SGLL, VISI…AIGA, AAVN…TITL, ITPI…LSGV, ASLG…CFVM, and WIGI…VTFF.

This sequence belongs to the multi antimicrobial extrusion (MATE) (TC 2.A.66.1) family.

Its subcellular location is the membrane. This is Protein DETOXIFICATION 7 from Arabidopsis thaliana (Mouse-ear cress).